The chain runs to 177 residues: ATP-dependent protease subunit HslV (177 aa).

Residue threonine 5 is part of the active site. The Na(+) site is built by glycine 161, cysteine 164, and threonine 167.

It belongs to the peptidase T1B family. HslV subfamily. A double ring-shaped homohexamer of HslV is capped on each side by a ring-shaped HslU homohexamer. The assembly of the HslU/HslV complex is dependent on binding of ATP.

It is found in the cytoplasm. It catalyses the reaction ATP-dependent cleavage of peptide bonds with broad specificity.. With respect to regulation, allosterically activated by HslU binding. Functionally, protease subunit of a proteasome-like degradation complex believed to be a general protein degrading machinery. The protein is ATP-dependent protease subunit HslV of Campylobacter concisus (strain 13826).